The sequence spans 195 residues: Probable GTP-binding protein EngB (195 aa).

The EngB-type G domain occupies 24–195 (GLTEVALSGR…EIWNFIETYI (172 aa)). GTP is bound by residues 32–39 (GRSNVGKS), 59–63 (GKTQT), 77–80 (DVPG), 144–147 (TKED), and 176–178 (YSS). 2 residues coordinate Mg(2+): Ser-39 and Thr-61.

It belongs to the TRAFAC class TrmE-Era-EngA-EngB-Septin-like GTPase superfamily. EngB GTPase family. Mg(2+) is required as a cofactor.

Its function is as follows. Necessary for normal cell division and for the maintenance of normal septation. The polypeptide is Probable GTP-binding protein EngB (Staphylococcus epidermidis (strain ATCC 35984 / DSM 28319 / BCRC 17069 / CCUG 31568 / BM 3577 / RP62A)).